A 266-amino-acid chain; its full sequence is MGSSPQSSTRTLLGLLFLLLVQLSSALKFDLHASSGHNERCIRNFVFKDQLVVVTAIVSGQRGDGQVVNMHIKDALGNDHGRPKDIAGETRQAFTSVADTAFDVCFENKLVSHHGVANPYKSVELDVEIGADARDWSSVQAAEKLKPVETDLRRIEEMVAEIVNEMEYLRAREQKLRDTNESTNERVKWFAFGTMGMLVGLGVWQVVYLRAYFRYVDFPVSWRVDGVVANCCSCCEQVEASYLRSSRVVFWSPLVMWTRLSWLILR.

A signal peptide spans 1 to 26 (MGSSPQSSTRTLLGLLFLLLVQLSSA). The Lumenal segment spans residues 27–188 (LKFDLHASSG…TNESTNERVK (162 aa)). The GOLD domain occupies 39–129 (ERCIRNFVFK…YKSVELDVEI (91 aa)). The chain crosses the membrane as a helical span at residues 189 to 209 (WFAFGTMGMLVGLGVWQVVYL). Topologically, residues 210–266 (RAYFRYVDFPVSWRVDGVVANCCSCCEQVEASYLRSSRVVFWSPLVMWTRLSWLILR) are cytoplasmic.

Belongs to the EMP24/GP25L family.

It localises to the endoplasmic reticulum membrane. Its subcellular location is the golgi apparatus membrane. Functionally, constituent of COPII-coated endoplasmic reticulum-derived transport vesicles. Required for efficient transport of a subset of secretory proteins to the Golgi. Facilitates retrograde transport from the Golgi to the endoplasmic reticulum. The polypeptide is Endoplasmic reticulum vesicle protein 25 (erv25) (Aspergillus fumigatus (strain ATCC MYA-4609 / CBS 101355 / FGSC A1100 / Af293) (Neosartorya fumigata)).